The sequence spans 107 residues: Large ribosomal subunit protein uL24 (107 aa).

Belongs to the universal ribosomal protein uL24 family. Part of the 50S ribosomal subunit.

In terms of biological role, one of two assembly initiator proteins, it binds directly to the 5'-end of the 23S rRNA, where it nucleates assembly of the 50S subunit. Its function is as follows. One of the proteins that surrounds the polypeptide exit tunnel on the outside of the subunit. The chain is Large ribosomal subunit protein uL24 from Caldanaerobacter subterraneus subsp. tengcongensis (strain DSM 15242 / JCM 11007 / NBRC 100824 / MB4) (Thermoanaerobacter tengcongensis).